The chain runs to 349 residues: Leucine-rich repeat-containing protein 58 (349 aa).

LRR repeat units lie at residues 14-34 (NLTH…NKRK), 35-56 (DVQQ…VNSF), 58-80 (HLHL…LGLT), 81-102 (KLKT…KELG), 105-125 (RLEV…QFLQ), 128-149 (TLKS…IENL), 151-173 (SLEF…ANLP), 174-195 (YLSY…LAQV), 197-217 (SLRS…ILSL), and 219-239 (QLQE…RDLT).

The protein is Leucine-rich repeat-containing protein 58 (lrrc58) of Xenopus tropicalis (Western clawed frog).